The following is a 372-amino-acid chain: 1,3,6,8-tetrahydroxynaphthalene synthase (372 aa).

The active site involves Cys138.

Belongs to the thiolase-like superfamily. Chalcone/stilbene synthases family. Homodimer.

It catalyses the reaction 5 malonyl-CoA + 5 H(+) = naphthalene-1,3,6,8-tetrol + 5 CO2 + 5 CoA + H2O. The protein operates within pigment biosynthesis; melanin biosynthesis. Functionally, involved in the biosynthesis of melanin but also various secondary metabolites containing a naphthoquinone ring. Catalyzes the iterative condensation of five CoA-linked malonyl units to form a pentaketide intermediate. THNS subsequently catalyzes the dual intramolecular Claisen and aldol condensations of this linear intermediate to produce the fused ring of 1,3,6,8-tetrahydroxynaphthalene (THN). The protein is 1,3,6,8-tetrahydroxynaphthalene synthase of Streptomyces griseus.